The primary structure comprises 386 residues: Lycopene beta-cyclase (386 aa).

An NAD(+)-binding site is contributed by 3-33; it reads DLILVGGGLANGLIAWRLRQRYPQLNLLLIE.

This sequence belongs to the lycopene cyclase family. The cofactor is FAD.

The catalysed reaction is a carotenoid psi-end group = a carotenoid beta-end derivative. It catalyses the reaction all-trans-lycopene = gamma-carotene. It carries out the reaction gamma-carotene = all-trans-beta-carotene. It functions in the pathway carotenoid biosynthesis; beta-carotene biosynthesis. Catalyzes the double cyclization reaction which converts lycopene to beta-carotene. The polypeptide is Lycopene beta-cyclase (Pseudescherichia vulneris (Escherichia vulneris)).